Consider the following 81-residue polypeptide: Small ribosomal subunit protein bS16 (81 aa).

It belongs to the bacterial ribosomal protein bS16 family.

The protein is Small ribosomal subunit protein bS16 of Alkaliphilus oremlandii (strain OhILAs) (Clostridium oremlandii (strain OhILAs)).